Consider the following 491-residue polypeptide: MTLRSDVLAYIPSPPQGVWHIGPIPLRAYALCIILGIVVAIWWGERRWQQRGGREGTVLDVAMFAVPFGLIGGRAYHVATDWRKYFGEGGNPVEALYIWQGGLGIWGAVFLGGIGAWIACRIYRIPLPAFGDAIAPPILLAQAIGRLGNWFNQELYGRETTLPWGLEIYPRFDAAGDPDPMNGISNGVVEKIVHPTFLYELLWNVLVVIALVQLDKRFRIGHGRLFALYVAGYSFGRFFVELMRDDEATLVAGIRINNFTSALVFLAAIAYFVFATKGREAPERLQPGGTTRPWPWQLAALRAAGVAANGPAEPGATASTATDTDGDAKDTPPSDAAATGGQGTAAKGDRGTADAADTAKDASATDSASNSASATDSDFGETAGSSDDADRAAAVKAASGATAAEKSAADKESAAGEAAADTSAADQPAADKSGSAKSAADKSAGKSGAGRGNESESTRDNESTSAGTAASATGSAGAGATDRVDSGENDA.

The next 3 helical transmembrane spans lie at 24-44 (IPLR…IWWG), 58-78 (VLDV…AYHV), and 98-118 (IWQG…GAWI). Arginine 146 provides a ligand contact to a 1,2-diacyl-sn-glycero-3-phospho-(1'-sn-glycerol). Transmembrane regions (helical) follow at residues 192–212 (IVHP…IALV) and 256–276 (INNF…VFAT). Residues 309–323 (NGPAEPGATASTATD) show a composition bias toward low complexity. The disordered stretch occupies residues 309-491 (NGPAEPGATA…DRVDSGENDA (183 aa)). The segment covering 347-360 (KGDRGTADAADTAK) has biased composition (basic and acidic residues). Composition is skewed to low complexity over residues 361–387 (DASA…GSSD), 394–406 (AVKA…AAEK), and 415–438 (AGEA…SAKS). The segment covering 453–462 (NESESTRDNE) has biased composition (basic and acidic residues). Positions 463-481 (STSAGTAASATGSAGAGAT) are enriched in low complexity. Positions 482–491 (DRVDSGENDA) are enriched in basic and acidic residues.

The protein belongs to the Lgt family.

Its subcellular location is the cell membrane. It catalyses the reaction L-cysteinyl-[prolipoprotein] + a 1,2-diacyl-sn-glycero-3-phospho-(1'-sn-glycerol) = an S-1,2-diacyl-sn-glyceryl-L-cysteinyl-[prolipoprotein] + sn-glycerol 1-phosphate + H(+). Its pathway is protein modification; lipoprotein biosynthesis (diacylglyceryl transfer). Catalyzes the transfer of the diacylglyceryl group from phosphatidylglycerol to the sulfhydryl group of the N-terminal cysteine of a prolipoprotein, the first step in the formation of mature lipoproteins. The protein is Phosphatidylglycerol--prolipoprotein diacylglyceryl transferase of Nocardia farcinica (strain IFM 10152).